The following is a 115-amino-acid chain: UPF0738 protein SERP0585 (115 aa).

It belongs to the UPF0738 family.

The protein is UPF0738 protein SERP0585 of Staphylococcus epidermidis (strain ATCC 35984 / DSM 28319 / BCRC 17069 / CCUG 31568 / BM 3577 / RP62A).